A 172-amino-acid polypeptide reads, in one-letter code: MALDLKKYVASIPDYPEPGIIFRDISPLMADGEAYREATDQIVQFARDKHVDMIVGPEARGFIVGCPVAYELGVGFAPARKKGKLPRETVKATYDLEYGQSALYLHKDAIKPGQNVLVTDDLLATGGTISATIQMVEELGGNVVGTAFLVELKELHGRDKIKDYDMLSLMQF.

Belongs to the purine/pyrimidine phosphoribosyltransferase family. In terms of assembly, homodimer.

The protein resides in the cytoplasm. It carries out the reaction AMP + diphosphate = 5-phospho-alpha-D-ribose 1-diphosphate + adenine. It functions in the pathway purine metabolism; AMP biosynthesis via salvage pathway; AMP from adenine: step 1/1. Catalyzes a salvage reaction resulting in the formation of AMP, that is energically less costly than de novo synthesis. The sequence is that of Adenine phosphoribosyltransferase from Lactiplantibacillus plantarum (strain ATCC BAA-793 / NCIMB 8826 / WCFS1) (Lactobacillus plantarum).